The following is a 64-amino-acid chain: Ribosome biogenesis protein Nop10 (64 aa).

It belongs to the NOP10 family.

Its function is as follows. Involved in ribosome biogenesis; more specifically in 18S rRNA pseudouridylation and in cleavage of pre-rRNA. This is Ribosome biogenesis protein Nop10 from Ignicoccus hospitalis (strain KIN4/I / DSM 18386 / JCM 14125).